Here is a 143-residue protein sequence, read N- to C-terminus: Large ribosomal subunit protein uL13 (143 aa).

The protein belongs to the universal ribosomal protein uL13 family. As to quaternary structure, part of the 50S ribosomal subunit.

In terms of biological role, this protein is one of the early assembly proteins of the 50S ribosomal subunit, although it is not seen to bind rRNA by itself. It is important during the early stages of 50S assembly. In Dehalococcoides mccartyi (strain CBDB1), this protein is Large ribosomal subunit protein uL13.